Here is a 148-residue protein sequence, read N- to C-terminus: Deoxyuridine 5'-triphosphate nucleotidohydrolase (148 aa).

Substrate-binding positions include 67–69 (RSG), asparagine 80, 84–86 (LID), and methionine 94.

Belongs to the dUTPase family. It depends on Mg(2+) as a cofactor.

It carries out the reaction dUTP + H2O = dUMP + diphosphate + H(+). The protein operates within pyrimidine metabolism; dUMP biosynthesis; dUMP from dCTP (dUTP route): step 2/2. This enzyme is involved in nucleotide metabolism: it produces dUMP, the immediate precursor of thymidine nucleotides and it decreases the intracellular concentration of dUTP so that uracil cannot be incorporated into DNA. The protein is Deoxyuridine 5'-triphosphate nucleotidohydrolase of Burkholderia thailandensis (strain ATCC 700388 / DSM 13276 / CCUG 48851 / CIP 106301 / E264).